The following is a 100-amino-acid chain: UPF0213 protein YhbQ (100 aa).

A GIY-YIG domain is found at 2–77 (TPWFLYLIRT…KQLTKRQKER (76 aa)).

The protein belongs to the UPF0213 family.

This Escherichia coli O157:H7 protein is UPF0213 protein YhbQ.